The sequence spans 186 residues: ADP-ribosylation factor-like protein 6 (186 aa).

Glycine 2 carries N-myristoyl glycine lipidation. Residues 24-31 (GLDNSGKT), threonine 50, 69-73 (DMSGQ), glycine 72, 130-133 (NKMD), and alanine 164 contribute to the GTP site. The Mg(2+) site is built by threonine 31 and threonine 50.

This sequence belongs to the small GTPase superfamily. Arf family. In terms of assembly, interacts with SEC61B, ARL6IP1, ARL6IP2, ARL6IP3, ARL6IP4 ARL6IP5 and ARL6IP6. Interacts (GTP-bound form) with the BBSome a complex that contains BBS1, BBS2, BBS4, BBS5, BBS7, BBS8/TTC8, BBS9 and BBIP10. Interacts (GTP-free form) with IFT27.

Its subcellular location is the cell projection. The protein localises to the cilium membrane. It is found in the cytoplasm. The protein resides in the cytoskeleton. It localises to the cilium axoneme. Its subcellular location is the cilium basal body. Involved in membrane protein trafficking at the base of the ciliary organelle. Mediates recruitment onto plasma membrane of the BBSome complex which would constitute a coat complex required for sorting of specific membrane proteins to the primary cilia. Together with BBS1, is necessary for correct trafficking of PKD1 to primary cilia. Together with the BBSome complex and LTZL1, controls SMO ciliary trafficking and contributes to the sonic hedgehog (SHH) pathway regulation. May regulate cilia assembly and disassembly and subsequent ciliary signaling events such as the Wnt signaling cascade. Isoform 2 may be required for proper retinal function and organization. This chain is ADP-ribosylation factor-like protein 6 (ARL6), found in Homo sapiens (Human).